The primary structure comprises 152 residues: Clitocypin-4/-3 (152 aa).

It belongs to the protease inhibitor I48 family. In terms of assembly, homodimer.

In terms of biological role, binds and inhibits cysteine proteinases. Inhibits most strongly papain and cathepsin L, more weakly bromelain and cathepsin B while it is completely ineffective against cathepsin H. The sequence is that of Clitocypin-4/-3 (clt4) from Clitocybe nebularis (Clouded agaric).